The chain runs to 99 residues: uncharacterized protein (99 aa).

A helical transmembrane segment spans residues 6-26; it reads LVCSIVFILFILFYDLKIGTI. The 48-residue stretch at 48 to 95 folds into the LysM domain; the sequence is KTVKVKPGDTVMSIVGSAGSPDDIVKDFEALNPNVKANAIQAGTAYKF.

Its subcellular location is the secreted. The protein localises to the cell wall. It localises to the membrane. This is an uncharacterized protein from Bacillus subtilis (strain 168).